The chain runs to 302 residues: Cuticle collagen 40 (302 aa).

2 disordered regions span residues 79–103 (RIKR…GGGG) and 119–302 (AGAP…APGY). Gly residues predominate over residues 91-103 (YAEGGAAAGGGGG). 5 triple-helical region regions span residues 114 to 143 (GAAG…AGSD), 162 to 185 (GPAG…DGNT), 189 to 221 (GGEG…PGQV), 226 to 252 (GTPG…AGAS), and 255 to 290 (GPAG…GGGC). The span at 137-154 (PGTAGSDAEAAAAPTASD) shows a compositional bias: low complexity. The span at 194–203 (AGPPGPPGPA) shows a compositional bias: pro residues. 2 stretches are compositionally biased toward low complexity: residues 205–234 (NPGT…AGAA) and 245–281 (NPGS…PGEA). A compositionally biased stretch (pro residues) spans 293-302 (CPPPRTAPGY).

This sequence belongs to the cuticular collagen family. As to quaternary structure, collagen polypeptide chains are complexed within the cuticle by disulfide bonds and other types of covalent cross-links.

In terms of biological role, nematode cuticles are composed largely of collagen-like proteins. The cuticle functions both as an exoskeleton and as a barrier to protect the worm from its environment. In Caenorhabditis elegans, this protein is Cuticle collagen 40 (col-40).